We begin with the raw amino-acid sequence, 105 residues long: Dynein axonemal light chain 4 (105 aa).

This sequence belongs to the dynein light chain family. Consists of at least two heavy chains and a number of intermediate and light chains.

It localises to the cytoplasm. The protein resides in the cytoskeleton. It is found in the cilium axoneme. Functionally, force generating protein of respiratory cilia. Produces force towards the minus ends of microtubules. Dynein has ATPase activity. The chain is Dynein axonemal light chain 4 (DNAL4) from Bos taurus (Bovine).